Reading from the N-terminus, the 534-residue chain is Glucans biosynthesis protein D (534 aa).

The segment at residues 1–28 (MYRRDFLKSVTAAWVAFGLPNPLGGAFA) is a signal peptide (tat-type signal).

This sequence belongs to the OpgD/OpgG family. In terms of processing, predicted to be exported by the Tat system. The position of the signal peptide cleavage has not been experimentally proven.

It is found in the periplasm. The protein operates within glycan metabolism; osmoregulated periplasmic glucan (OPG) biosynthesis. Probably involved in the control of the structural glucose backbone of osmoregulated periplasmic glucans (OPGs). This Xylella fastidiosa (strain M23) protein is Glucans biosynthesis protein D.